The chain runs to 205 residues: Outer-membrane lipoprotein LolB (205 aa).

A signal peptide spans 1–17 (MRLRLFLAASALALLSG). C18 carries N-palmitoyl cysteine lipidation. The S-diacylglycerol cysteine moiety is linked to residue C18.

It belongs to the LolB family. In terms of assembly, monomer.

Its subcellular location is the cell outer membrane. Plays a critical role in the incorporation of lipoproteins in the outer membrane after they are released by the LolA protein. This Pseudomonas paraeruginosa (strain DSM 24068 / PA7) (Pseudomonas aeruginosa (strain PA7)) protein is Outer-membrane lipoprotein LolB.